The primary structure comprises 744 residues: NAD(P)H-quinone oxidoreductase subunit 5, chloroplastic (744 aa).

The next 16 membrane-spanning stretches (helical) occupy residues 9 to 29 (WIIPFLPLPVPMLIGLGLLFF), 40 to 60 (WAFQSVLLLSIVMIFSINLSI), 89 to 109 (IDPLTSIMSILITTVGIMVLI), 125 to 145 (FAYMSFFSTSMLGLVTSSNLI), 147 to 167 (IYIFWELVGIRSYLLIGFWFT), 185 to 205 (GDFGLLLGILGFYWITGSFEF), 219 to 239 (NEVNFLFVTLCAVLLFAGAIA), 258 to 278 (TPISALIHAATMVAAGIFLVA), 290 to 312 (IMNFISLIGIITVFLGATLALAQ), 327 to 347 (LGYMMLALGMGSYRSALFHLI), 354 to 374 (ALLFLGSGSVIHSMETLVGYC), 396 to 416 (TSFFLGTLSLCGIPPLACFWS), 425 to 445 (WLYSPIFAIIAWSTAGLTAFY), 549 to 569 (LFPILILVLFTLFVGFLGIPF), 608 to 628 (VFSVSISSFGIFIAFFLYKPV), and 724 to 744 (YLFFYFSYLSFFLLIYYFFHF).

It belongs to the complex I subunit 5 family. As to quaternary structure, NDH is composed of at least 16 different subunits, 5 of which are encoded in the nucleus.

Its subcellular location is the plastid. It localises to the chloroplast thylakoid membrane. It carries out the reaction a plastoquinone + NADH + (n+1) H(+)(in) = a plastoquinol + NAD(+) + n H(+)(out). It catalyses the reaction a plastoquinone + NADPH + (n+1) H(+)(in) = a plastoquinol + NADP(+) + n H(+)(out). NDH shuttles electrons from NAD(P)H:plastoquinone, via FMN and iron-sulfur (Fe-S) centers, to quinones in the photosynthetic chain and possibly in a chloroplast respiratory chain. The immediate electron acceptor for the enzyme in this species is believed to be plastoquinone. Couples the redox reaction to proton translocation, and thus conserves the redox energy in a proton gradient. This chain is NAD(P)H-quinone oxidoreductase subunit 5, chloroplastic (ndhF), found in Gerbera jamesonii (Transvaal daisy).